A 37-amino-acid polypeptide reads, in one-letter code: Myo-inositol-binding protein (37 aa).

It belongs to the bacterial solute-binding protein 2 family.

It is found in the periplasm. The polypeptide is Myo-inositol-binding protein (Pseudomonas sp).